Here is a 372-residue protein sequence, read N- to C-terminus: MKYDLIIIGSGSVGAAAGYYATRAGLNVLMTDAHMPPHQHGSHHGDTRLIRHAYGEGEKYVPLVLRAQTLWDELSRHNEDDPIFVRSGVINLGPADSAFLANVAHSAEQWQLNVEKLDAQGIMARWPEIRVPDNYIGLFETDSGFLRSELAIKTWIQLAKEAGCAQLFNCPVTAIRHDDDGVTIETVDGEYQAKKAIVCAGTWVKDLLPELPVQPVRKVFAWYQADGRYSVKNKFPAFTGELPNGDQYYGFPAENDALKIGKHNGGQVIHSADERVPFAEVVSDGSEAFPFLRNVLPGIGCCLYGAACTYDNSPDEDFIIDTLPGHDNTLLITGLSGHGFKFASVLGEIAADFAQDKKSDFDLTPFRLSRFQ.

4-34 serves as a coordination point for FAD; sequence DLIIIGSGSVGAAAGYYATRAGLNVLMTDAH. C308 bears the S-8alpha-FAD cysteine mark.

It belongs to the MSOX/MTOX family. MTOX subfamily. In terms of assembly, monomer. Requires FAD as cofactor.

It catalyses the reaction N(alpha)-methyl-L-tryptophan + O2 + H2O = L-tryptophan + formaldehyde + H2O2. Its function is as follows. Catalyzes the oxidative demethylation of N-methyl-L-tryptophan. This Shigella boydii serotype 18 (strain CDC 3083-94 / BS512) protein is N-methyl-L-tryptophan oxidase.